Reading from the N-terminus, the 382-residue chain is Mannitol-1-phosphate 5-dehydrogenase (382 aa).

3-14 (ALHFGAGNIGRG) serves as a coordination point for NAD(+).

Belongs to the mannitol dehydrogenase family.

It catalyses the reaction D-mannitol 1-phosphate + NAD(+) = beta-D-fructose 6-phosphate + NADH + H(+). The protein is Mannitol-1-phosphate 5-dehydrogenase of Salmonella agona (strain SL483).